The sequence spans 488 residues: uncharacterized protein (488 aa).

12 helical membrane passes run 2–22 (FGLP…VFLV), 27–47 (VHAF…GGMS), 59–79 (FGGT…MGSV), 106–126 (LAIT…FVIL), 176–196 (IGAM…GIVL), 241–261 (LLPI…HLFV), 275–295 (IVSF…ISVY), 314–334 (VKTA…GAVL), 347–367 (IANL…LVRF), 368–388 (IQGS…PILA), 438–458 (VPTT…NLIF), and 461–481 (DGSV…LFYI).

It belongs to the GntP permease family.

The protein localises to the cell inner membrane. This is an uncharacterized protein from Haemophilus influenzae (strain ATCC 51907 / DSM 11121 / KW20 / Rd).